We begin with the raw amino-acid sequence, 309 residues long: Glutaminase (309 aa).

The substrate site is built by serine 65, asparagine 117, glutamate 162, asparagine 169, tyrosine 193, tyrosine 245, and valine 263.

It belongs to the glutaminase family. As to quaternary structure, homotetramer.

It catalyses the reaction L-glutamine + H2O = L-glutamate + NH4(+). The protein is Glutaminase of Bacillus cytotoxicus (strain DSM 22905 / CIP 110041 / 391-98 / NVH 391-98).